We begin with the raw amino-acid sequence, 318 residues long: MSKPDVSTFQGLILALQEYWAKQGCVVLQPLDMEVGAGTFHPATFLRAIGPETWNTAYVQPCRRPTDGRYGENPNRLQHYYQFQVALKPSPDNIQELYLGSLAHLGLDTNIHDIRFVEDNWESPTLGAWGLGWEVWLNGMEVTQFTYFQQVGGLECYPVTGEITYGLERIAMYLQDVNSIYDLVWTKRPDGGIVTYGDVFHQNEVEMSHFNFSEANVEFLFQTFDVCEAESRRLIEKGLPLPAYEMVMKASHAFNLLDARQAISVTERQRFILRVRTLARDVAQAYFDARLKLGFPLADPKLRDEVIARVEAEMEKKA.

It belongs to the class-II aminoacyl-tRNA synthetase family. As to quaternary structure, tetramer of two alpha and two beta subunits.

It localises to the cytoplasm. The catalysed reaction is tRNA(Gly) + glycine + ATP = glycyl-tRNA(Gly) + AMP + diphosphate. The sequence is that of Glycine--tRNA ligase alpha subunit from Saccharophagus degradans (strain 2-40 / ATCC 43961 / DSM 17024).